Here is a 541-residue protein sequence, read N- to C-terminus: Protein panoramix (541 aa).

The interval 1–169 is interaction with Piwi; the sequence is MEAPMKLEVK…TLVPDEQQSF (169 aa). 2 disordered regions span residues 52–75 and 198–281; these read SDPE…LQPS and TAEN…TELD. The stretch at 194-216 forms a coiled coil; it reads MLEMTAENRKVKHKKKKHKKERS. The segment covering 203–220 has biased composition (basic residues); sequence KVKHKKKKHKKERSHRSN. Basic and acidic residues-rich tracts occupy residues 241–251 and 269–279; these read DDKNQFDCDYR and SSKERKLRDTE. A nxf2-interacting region (NIR) region spans residues 315-343; that stretch reads LSKADKRSLAVARAELVLEQIQQKANKEE. Positions 323 to 343 form a coiled coil; the sequence is LAVARAELVLEQIQQKANKEE. A necessary for interaction with nxf2 and protein stability region spans residues 387 to 446; the sequence is TPGTRIDLSKWGLETVPEATKRLLRLLGIDVARLKELQSTVKPSQRILKLKKEQLEQGLA.

As to quaternary structure, in the ovaries, part of a complex composed of at least Panx, nxf2, piwi and Nxt1. The complex is knowns as Panx-induced cotranscriptional silencing (PICTS) complex, Panx-nxf2-dependent TAP/p15 silencing (Pandas complex), SFiNX (silencing factor interacting nuclear export variant) or piwi-Panx-nxf2-p15 (PPNP) complex. Interacts (via NIR region) with nxf2 (via TAP-C domain); the interaction is direct. Expressed in female gonads (at protein level).

It localises to the nucleus. Its function is as follows. Acts via the piwi-interacting RNA (piRNA) pathway which mediates the repression of transposable elements during meiosis by forming complexes composed of piRNAs and piwi proteins and governs the methylation and subsequent repression of transposons. Required for transcriptional silencing of transposons targeted by piwi and confers its effects by interacting with nascent RNA transcripts. Likely to be recruited to nascent transcripts cotranscriptionally by piwi and to recruit additional factors involved in transcriptional silencing. In the ovaries, forms a complex with nxf2, piwi and Nxt1 which acts as effectors of cotranscriptional transposon silencing. The interaction with nxf2 stabilizes the nuclear protein complex. The chain is Protein panoramix from Drosophila melanogaster (Fruit fly).